A 359-amino-acid polypeptide reads, in one-letter code: Phospho-N-acetylmuramoyl-pentapeptide-transferase (359 aa).

Transmembrane regions (helical) follow at residues 26-46 (TIYA…WLIR), 75-95 (GGVL…NLTI), 97-117 (YVWL…ADDY), 134-154 (LACE…KPGF), 166-186 (VLPD…VGAA), 197-217 (GLAI…AYFA), 233-253 (GVGE…GFLW), 261-281 (VFMG…LAIV), 286-306 (ILLA…IFQV), and 336-356 (KVIV…ISTL).

This sequence belongs to the glycosyltransferase 4 family. MraY subfamily. Requires Mg(2+) as cofactor.

It localises to the cell inner membrane. It carries out the reaction UDP-N-acetyl-alpha-D-muramoyl-L-alanyl-gamma-D-glutamyl-meso-2,6-diaminopimeloyl-D-alanyl-D-alanine + di-trans,octa-cis-undecaprenyl phosphate = di-trans,octa-cis-undecaprenyl diphospho-N-acetyl-alpha-D-muramoyl-L-alanyl-D-glutamyl-meso-2,6-diaminopimeloyl-D-alanyl-D-alanine + UMP. It functions in the pathway cell wall biogenesis; peptidoglycan biosynthesis. Functionally, catalyzes the initial step of the lipid cycle reactions in the biosynthesis of the cell wall peptidoglycan: transfers peptidoglycan precursor phospho-MurNAc-pentapeptide from UDP-MurNAc-pentapeptide onto the lipid carrier undecaprenyl phosphate, yielding undecaprenyl-pyrophosphoryl-MurNAc-pentapeptide, known as lipid I. This is Phospho-N-acetylmuramoyl-pentapeptide-transferase from Syntrophus aciditrophicus (strain SB).